The following is a 161-amino-acid chain: Putative pre-16S rRNA nuclease (161 aa).

The segment at 141-161 (AAGSPPGALVPRNRVDPDRHA) is disordered.

This sequence belongs to the YqgF nuclease family.

The protein resides in the cytoplasm. Could be a nuclease involved in processing of the 5'-end of pre-16S rRNA. The polypeptide is Putative pre-16S rRNA nuclease (Clavibacter michiganensis subsp. michiganensis (strain NCPPB 382)).